The sequence spans 226 residues: V-type proton ATPase subunit E (226 aa).

It belongs to the V-ATPase E subunit family. As to quaternary structure, V-ATPase is a heteromultimeric enzyme composed of a peripheral catalytic V1 complex (components A to H) attached to an integral membrane V0 proton pore complex (components: a, c, c', c'' and d).

Functionally, subunit of the peripheral V1 complex of vacuolar ATPase essential for assembly or catalytic function. V-ATPase is responsible for acidifying a variety of intracellular compartments in eukaryotic cells. The chain is V-type proton ATPase subunit E (VATE) from Mesembryanthemum crystallinum (Common ice plant).